The sequence spans 250 residues: Probable chemoreceptor glutamine deamidase CheD (250 aa).

This sequence belongs to the CheD family.

The catalysed reaction is L-glutaminyl-[protein] + H2O = L-glutamyl-[protein] + NH4(+). Functionally, probably deamidates glutamine residues to glutamate on methyl-accepting chemotaxis receptors (MCPs), playing an important role in chemotaxis. The polypeptide is Probable chemoreceptor glutamine deamidase CheD (Paraburkholderia xenovorans (strain LB400)).